A 547-amino-acid chain; its full sequence is Putative laccase-5 (547 aa).

The first 35 residues, 1–35 (MGTPRGLRNAGSSSSACRFLAAFAVLLALPTLTAG), serve as a signal peptide directing secretion. Plastocyanin-like domains follow at residues 43-159 (NVQM…PKRG) and 170-323 (ELPP…YAPT). N-linked (GlcNAc...) asparagine glycans are attached at residues asparagine 48 and asparagine 89. Histidine 93, histidine 95, histidine 138, and histidine 140 together coordinate Cu cation. Asparagine 199, asparagine 215, asparagine 251, asparagine 311, asparagine 342, asparagine 349, asparagine 388, asparagine 395, asparagine 405, and asparagine 430 each carry an N-linked (GlcNAc...) asparagine glycan. Residues 408-531 (FVRPRVALLE…SMAWLVNDGP (124 aa)) enclose the Plastocyanin-like 3 domain. Residues histidine 448, histidine 451, histidine 453, histidine 510, cysteine 511, histidine 512, and histidine 516 each coordinate Cu cation.

Belongs to the multicopper oxidase family. Requires Cu cation as cofactor.

The protein resides in the secreted. It localises to the extracellular space. Its subcellular location is the apoplast. It carries out the reaction 4 hydroquinone + O2 = 4 benzosemiquinone + 2 H2O. Functionally, lignin degradation and detoxification of lignin-derived products. This chain is Putative laccase-5 (LAC5), found in Oryza sativa subsp. japonica (Rice).